A 244-amino-acid polypeptide reads, in one-letter code: Phosphoadenosine 5'-phosphosulfate reductase (244 aa).

C239 acts as the Nucleophile; cysteine thiosulfonate intermediate in catalysis.

It belongs to the PAPS reductase family. CysH subfamily.

It is found in the cytoplasm. It carries out the reaction [thioredoxin]-disulfide + sulfite + adenosine 3',5'-bisphosphate + 2 H(+) = [thioredoxin]-dithiol + 3'-phosphoadenylyl sulfate. It functions in the pathway sulfur metabolism; hydrogen sulfide biosynthesis; sulfite from sulfate: step 3/3. Catalyzes the formation of sulfite from phosphoadenosine 5'-phosphosulfate (PAPS) using thioredoxin as an electron donor. This Salmonella heidelberg (strain SL476) protein is Phosphoadenosine 5'-phosphosulfate reductase.